The chain runs to 236 residues: 5'-methylthioadenosine/S-adenosylhomocysteine nucleosidase (236 aa).

Glu12 acts as the Proton acceptor in catalysis. Substrate contacts are provided by residues Gly78, Ile153, and 174–175; that span reads ME. Asp198 acts as the Proton donor in catalysis.

It belongs to the PNP/UDP phosphorylase family. MtnN subfamily.

It carries out the reaction S-adenosyl-L-homocysteine + H2O = S-(5-deoxy-D-ribos-5-yl)-L-homocysteine + adenine. It catalyses the reaction S-methyl-5'-thioadenosine + H2O = 5-(methylsulfanyl)-D-ribose + adenine. The enzyme catalyses 5'-deoxyadenosine + H2O = 5-deoxy-D-ribose + adenine. Its pathway is amino-acid biosynthesis; L-methionine biosynthesis via salvage pathway; S-methyl-5-thio-alpha-D-ribose 1-phosphate from S-methyl-5'-thioadenosine (hydrolase route): step 1/2. In terms of biological role, catalyzes the irreversible cleavage of the glycosidic bond in both 5'-methylthioadenosine (MTA) and S-adenosylhomocysteine (SAH/AdoHcy) to adenine and the corresponding thioribose, 5'-methylthioribose and S-ribosylhomocysteine, respectively. Also cleaves 5'-deoxyadenosine, a toxic by-product of radical S-adenosylmethionine (SAM) enzymes, into 5-deoxyribose and adenine. The chain is 5'-methylthioadenosine/S-adenosylhomocysteine nucleosidase from Shewanella baltica (strain OS185).